The following is a 192-amino-acid chain: Thymidine kinase (192 aa).

Residues serine 9–threonine 16 and aspartate 88–histidine 91 contribute to the ATP site. Glutamate 89 serves as the catalytic Proton acceptor. Cysteine 146, cysteine 148, cysteine 183, and histidine 186 together coordinate Zn(2+).

This sequence belongs to the thymidine kinase family. In terms of assembly, homotetramer.

Its subcellular location is the cytoplasm. It catalyses the reaction thymidine + ATP = dTMP + ADP + H(+). The polypeptide is Thymidine kinase (Blochmanniella floridana).